The chain runs to 265 residues: Glutamate racemase (265 aa).

Substrate contacts are provided by residues Asp-9 to Ser-10 and Tyr-41 to Gly-42. Catalysis depends on Cys-73, which acts as the Proton donor/acceptor. Asn-74–Thr-75 serves as a coordination point for substrate. Residue Cys-180 is the Proton donor/acceptor of the active site. Thr-181–His-182 provides a ligand contact to substrate.

It belongs to the aspartate/glutamate racemases family.

It catalyses the reaction L-glutamate = D-glutamate. It functions in the pathway cell wall biogenesis; peptidoglycan biosynthesis. In terms of biological role, provides the (R)-glutamate required for cell wall biosynthesis. The chain is Glutamate racemase from Aliivibrio salmonicida (strain LFI1238) (Vibrio salmonicida (strain LFI1238)).